The sequence spans 632 residues: Deoxynucleoside triphosphate triphosphohydrolase SAMHD1 (632 aa).

Residues methionine 1 to tyrosine 22 form a disordered region. Residues tryptophan 44–asparagine 107 form the SAM domain. GTP is bound by residues lysine 113 and valine 114. Asparagine 116 contributes to the dGTP binding site. Aspartate 134, glutamine 139, and arginine 142 together coordinate GTP. 4 residues coordinate dGTP: glutamine 146, leucine 147, valine 153, and arginine 161. Glutamine 146 lines the dATP pocket. Residue glutamine 146 coordinates dCTP. Glutamine 146 is a binding site for dTTP. Arginine 161 contacts dATP. Residue arginine 161 coordinates dCTP. Arginine 161 lines the dTTP pocket. An HD domain is found at arginine 161 to phenylalanine 321. Mn(2+)-binding residues include histidine 164, histidine 203, and aspartate 204. Histidine 207 and histidine 212 together coordinate dATP. DCTP contacts are provided by histidine 207 and histidine 212. Positions 207 and 212 each coordinate dTTP. Histidine 230 is a catalytic residue. Aspartate 316 lines the Mn(2+) pocket. The dGTP site is built by lysine 317, tyrosine 320, aspartate 324, arginine 338, arginine 357, lysine 359, asparagine 363, arginine 371, tyrosine 379, glutamine 380, histidine 381, and lysine 382. DATP is bound by residues lysine 317, tyrosine 320, and aspartate 324. DCTP is bound by residues lysine 317, tyrosine 320, and aspartate 324. DTTP contacts are provided by lysine 317, tyrosine 320, and aspartate 324. Residue arginine 371 coordinates dATP. Arginine 371 is a binding site for dCTP. DATP is bound at residue glutamine 380. Position 380 (glutamine 380) interacts with dCTP. Glutamine 380 is a binding site for dTTP. Positions 456, 460, and 529 each coordinate GTP. A dGTP-binding site is contributed by lysine 529.

The protein belongs to the SAMHD1 family. In terms of assembly, homodimer; in absence of GTP and dNTP. Homotetramer; in GTP- and dNTP-bound form. Interacts with rbbp8/CtIP. Zn(2+) is required as a cofactor.

It is found in the nucleus. The protein localises to the chromosome. It catalyses the reaction a 2'-deoxyribonucleoside 5'-triphosphate + H2O = a 2'-deoxyribonucleoside + triphosphate + H(+). The catalysed reaction is dATP + H2O = 2'-deoxyadenosine + triphosphate + H(+). It carries out the reaction dCTP + H2O = 2'-deoxycytidine + triphosphate + H(+). The enzyme catalyses dGTP + H2O = 2'-deoxyguanosine + triphosphate + H(+). It catalyses the reaction dTTP + H2O = thymidine + triphosphate + H(+). With respect to regulation, allosterically activated and regulated via the combined actions of GTP and dNTPs (dATP, dGTP, dTTP and dCTP): Allosteric site 1 binds GTP, while allosteric site 2 binds dNTP. Allosteric activation promotes the formation of highly active homotetramers. Protein that acts both as a host restriction factor involved in defense response to virus and as a regulator of DNA end resection at stalled replication forks. Has deoxynucleoside triphosphate (dNTPase) activity, which is required to restrict infection by viruses: dNTPase activity reduces cellular dNTP levels to levels too low for retroviral reverse transcription to occur, blocking early-stage virus replication in dendritic and other myeloid cells. Functions during S phase at stalled DNA replication forks to promote the resection of gapped or reversed forks: acts by stimulating the exonuclease activity of mre11, activating the ATR-CHK1 pathway and allowing the forks to restart replication. Ability to promote DNA end resection at stalled replication forks is independent of dNTPase activity. This chain is Deoxynucleoside triphosphate triphosphohydrolase SAMHD1, found in Xenopus laevis (African clawed frog).